We begin with the raw amino-acid sequence, 225 residues long: Glutathione S-transferase U2 (225 aa).

The region spanning 6-85 (ESVKLLGFWI…YIDQTWNNNP (80 aa)) is the GST N-terminal domain. Glutathione-binding positions include 16–17 (SP), 42–43 (KK), 56–57 (KV), and 69–70 (ES). The GST C-terminal domain occupies 90–217 (DPYEKAMVRF…EKHIERMKKI (128 aa)). Threonine 151 carries the post-translational modification Phosphothreonine.

Belongs to the GST superfamily. Tau family.

It localises to the cytoplasm. The protein localises to the cytosol. It catalyses the reaction RX + glutathione = an S-substituted glutathione + a halide anion + H(+). May be involved in the conjugation of reduced glutathione to a wide number of exogenous and endogenous hydrophobic electrophiles and have a detoxification role against certain herbicides. This Arabidopsis thaliana (Mouse-ear cress) protein is Glutathione S-transferase U2 (GSTU2).